We begin with the raw amino-acid sequence, 165 residues long: Keratin-associated protein 5-7 (165 aa).

Tandem repeats lie at residues 35–38 (CCVP), 41–44 (CCKP), 47–50 (CCVP), 116–119 (CCKP), 126–129 (CCKP), 145–148 (CCNP), and 155–158 (CCVP). The segment at 35–158 (CCVPVCCCKP…CCSQSSCCVP (124 aa)) is 7 X 4 AA repeats of C-C-X-P.

Belongs to the KRTAP type 5 family. As to quaternary structure, interacts with hair keratins. As to expression, expressed in hair root but not in skin.

In the hair cortex, hair keratin intermediate filaments are embedded in an interfilamentous matrix, consisting of hair keratin-associated protein (KRTAP), which are essential for the formation of a rigid and resistant hair shaft through their extensive disulfide bond cross-linking with abundant cysteine residues of hair keratins. The matrix proteins include the high-sulfur and high-glycine-tyrosine keratins. The chain is Keratin-associated protein 5-7 (KRTAP5-7) from Homo sapiens (Human).